Here is a 469-residue protein sequence, read N- to C-terminus: 3-isopropylmalate dehydratase large subunit (469 aa).

Residues Cys-347, Cys-407, and Cys-410 each coordinate [4Fe-4S] cluster.

Belongs to the aconitase/IPM isomerase family. LeuC type 1 subfamily. As to quaternary structure, heterodimer of LeuC and LeuD. It depends on [4Fe-4S] cluster as a cofactor.

The catalysed reaction is (2R,3S)-3-isopropylmalate = (2S)-2-isopropylmalate. It participates in amino-acid biosynthesis; L-leucine biosynthesis; L-leucine from 3-methyl-2-oxobutanoate: step 2/4. Its function is as follows. Catalyzes the isomerization between 2-isopropylmalate and 3-isopropylmalate, via the formation of 2-isopropylmaleate. The sequence is that of 3-isopropylmalate dehydratase large subunit from Photorhabdus laumondii subsp. laumondii (strain DSM 15139 / CIP 105565 / TT01) (Photorhabdus luminescens subsp. laumondii).